Reading from the N-terminus, the 531-residue chain is GPI alpha-1,2-mannosyltransferase 3 (531 aa).

A glycan (N-linked (GlcNAc...) asparagine) is linked at Asn84. 3 consecutive transmembrane segments (helical) span residues 99 to 119 (GLRGFSYPLMFAAIYKVLYLL), 124 to 144 (VWFLIWIPRLAQAVLSGIADV), and 174 to 196 (YCATRTLTNTMEAVLSTFALYYY). N-linked (GlcNAc...) asparagine glycosylation is present at Asn204. The next 6 helical transmembrane spans lie at 210 to 230 (LICVALAFLIRPTAVILWIPL), 249 to 269 (YLPIGILTLAASLTVDRIFFG), 303 to 323 (GVPVILCTHLPFFIHGCMVTP), 328 to 348 (ILLVAVAWTVLTYSALSHKEF), 350 to 370 (FIYPVLPVCMVFCGFSFSNLK), and 375 to 395 (AAVGFLVLSNLFPALYTGLIH). 2 N-linked (GlcNAc...) asparagine glycosylation sites follow: Asn414 and Asn476.

It belongs to the glycosyltransferase 22 family. PIGB subfamily.

Its subcellular location is the endoplasmic reticulum membrane. It functions in the pathway glycolipid biosynthesis; glycosylphosphatidylinositol-anchor biosynthesis. Alpha-1,2-mannosyltransferase that catalyzes the transfer of the third mannose, via an alpha-1,2 bond, from a dolichol-phosphate-mannose (Dol-P-Man) to an alpha-D-Man-(1-&gt;6)-2-PEtn-alpha-D-Man-(1-&gt;4)-alpha-D-GlcN-(1-&gt;6)-(1-radyl,2-acyl-sn-glycero-3-phospho)-2-acyl-inositol intermediate to generate an alpha-D-Man-(1-&gt;2)-alpha-D-Man-(1-&gt;6)-2-PEtn-alpha-D-Man-(1-&gt;4)-alpha-D-GlcN-(1-&gt;6)-(1-radyl,2-acyl-sn-glycero-3-phospho)-2-acyl-inositol (also termed H6) and participates in the nineth step of the glycosylphosphatidylinositol-anchor biosynthesis. May also add the third mannose to an alpha-D-Man-(1-&gt;6)-alpha-D-Man-(1-&gt;4)-alpha-D-GlcN-(1-&gt;6)-(1-radyl,2-acyl-sn-glycero-3-phospho)-2-acyl-inositol (also termed H3) intermediate generating an alpha-D-Man-(1-&gt;2)-alpha-D-Man-(1-&gt;6)-alpha-D-Man-(1-&gt;4)-alpha-D-GlcN-(1-&gt;6)-(1-radyl,2-acyl-sn-glycero-3-phospho)-2-acyl-inositol (also termed H4). This chain is GPI alpha-1,2-mannosyltransferase 3, found in Xenopus laevis (African clawed frog).